Reading from the N-terminus, the 307-residue chain is Taste receptor type 2 member 41 (307 aa).

Topologically, residues 1–7 (MQAALTA) are extracellular. Residues 8–28 (FFMLLFSLLSLLGIAANGFIV) form a helical membrane-spanning segment. The Cytoplasmic segment spans residues 29–40 (LVLGREWLRYGR). The chain crosses the membrane as a helical span at residues 41-61 (LLPLDMILISLGASRFCLQLV). Residues 62 to 88 (GTVHNFYYSAQKVEYSGGLGRQFFHLH) lie on the Extracellular side of the membrane. The helical transmembrane segment at 89 to 109 (WHFLNSATFWFCSWLSVLFCV) threads the bilayer. The Cytoplasmic segment spans residues 110–129 (KIANITHPTFLWLKWRFPAW). The helical transmembrane segment at 130–150 (VPWLLLGSVLISFIITLLFFW) threads the bilayer. Residues 151 to 183 (VNYPAYQEFLIRKFSVNMTYKWNTRIETYYFPS) lie on the Extracellular side of the membrane. N-linked (GlcNAc...) asparagine glycosylation is present at asparagine 167. A helical transmembrane segment spans residues 184 to 204 (LKLVIWSIPFSVFLVSIMLLI). The Cytoplasmic segment spans residues 205-234 (NSLRRHTQRMQHNGHSLQDPSTQAHTRALK). Residues 235-255 (SLISFLILYALSFLSLIIDAT) traverse the membrane as a helical segment. Over 256-264 (KFISMQNDF) the chain is Extracellular. A helical membrane pass occupies residues 265-285 (YWPWQIAVYLCISIHPFILIF). Residues 286–307 (SNLKLRSVFSQLLLLARGFWVA) lie on the Cytoplasmic side of the membrane.

It belongs to the G-protein coupled receptor T2R family.

The protein resides in the membrane. Functionally, receptor that may play a role in the perception of bitterness and is gustducin-linked. May play a role in sensing the chemical composition of the gastrointestinal content. The activity of this receptor may stimulate alpha gustducin, mediate PLC-beta-2 activation and lead to the gating of TRPM5. This chain is Taste receptor type 2 member 41 (TAS2R41), found in Pan paniscus (Pygmy chimpanzee).